The following is a 345-amino-acid chain: S-adenosylmethionine:tRNA ribosyltransferase-isomerase (345 aa).

The protein belongs to the QueA family. In terms of assembly, monomer.

Its subcellular location is the cytoplasm. It carries out the reaction 7-aminomethyl-7-carbaguanosine(34) in tRNA + S-adenosyl-L-methionine = epoxyqueuosine(34) in tRNA + adenine + L-methionine + 2 H(+). Its pathway is tRNA modification; tRNA-queuosine biosynthesis. Transfers and isomerizes the ribose moiety from AdoMet to the 7-aminomethyl group of 7-deazaguanine (preQ1-tRNA) to give epoxyqueuosine (oQ-tRNA). The protein is S-adenosylmethionine:tRNA ribosyltransferase-isomerase of Helicobacter pylori (strain Shi470).